The primary structure comprises 1023 residues: Probable histidine kinase 3 (1023 aa).

Topologically, residues 1 to 80 (MDEMSCGGGG…RGWRVVRETW (80 aa)) are cytoplasmic. Residues 81–101 (WWVLLLWILAGSLGSFYLFLF) traverse the membrane as a helical segment. Residues 102-387 (MNAQSLDKRR…CRFEKKPPWP (286 aa)) are Extracellular-facing. The region spanning 151–352 (TPSAIDQMTF…TNESPISMYG (202 aa)) is the CHASE domain. Residues 388–408 (WLAITSSFGTLVIALLTGHIF) form a helical membrane-spanning segment. Over 409 to 1023 (QATVHRIAKV…RFFQNHDQVE (615 aa)) the chain is Cytoplasmic. The Histidine kinase domain maps to 445 to 715 (TVSHEIRTPM…TFTFTAVLMR (271 aa)). His-448 carries the phosphohistidine; by autocatalysis modification. Response regulatory domains follow at residues 732–854 (NALV…RRAL) and 880–1016 (QIIV…ARFF). Asp-783 is subject to 4-aspartylphosphate. Residues 812-831 (LFLLGSSASSPKGGSDTSRE) form a disordered region. The span at 817 to 827 (SSASSPKGGSD) shows a compositional bias: polar residues. At Asp-930 the chain carries 4-aspartylphosphate.

In terms of processing, activation probably requires a transfer of a phosphate group between a His in the transmitter domain and an Asp of the receiver domain. Highly expressed in young leaves and at lower levels in roots, mature leaves, stems and spikelets.

The protein resides in the cell membrane. The enzyme catalyses ATP + protein L-histidine = ADP + protein N-phospho-L-histidine.. In terms of biological role, cytokinin receptor related to bacterial two-component regulators. Functions as a histidine kinase and transmits the stress signal to a downstream MAPK cascade. The polypeptide is Probable histidine kinase 3 (Oryza sativa subsp. japonica (Rice)).